We begin with the raw amino-acid sequence, 478 residues long: ATP synthase subunit beta (478 aa).

158-165 (GGAGVGKT) contributes to the ATP binding site.

Belongs to the ATPase alpha/beta chains family. As to quaternary structure, F-type ATPases have 2 components, CF(1) - the catalytic core - and CF(0) - the membrane proton channel. CF(1) has five subunits: alpha(3), beta(3), gamma(1), delta(1), epsilon(1). CF(0) has three main subunits: a(1), b(2) and c(9-12). The alpha and beta chains form an alternating ring which encloses part of the gamma chain. CF(1) is attached to CF(0) by a central stalk formed by the gamma and epsilon chains, while a peripheral stalk is formed by the delta and b chains.

It localises to the cell inner membrane. The enzyme catalyses ATP + H2O + 4 H(+)(in) = ADP + phosphate + 5 H(+)(out). Functionally, produces ATP from ADP in the presence of a proton gradient across the membrane. The catalytic sites are hosted primarily by the beta subunits. This is ATP synthase subunit beta from Rhizobium johnstonii (strain DSM 114642 / LMG 32736 / 3841) (Rhizobium leguminosarum bv. viciae).